We begin with the raw amino-acid sequence, 78 residues long: MSRVCQVTGKRPVTGNNRSHAMNATKRRFLPNLHSHRFWVESEKRFVTLRVSAKGMRVIDKKGIETVLADLRTRGEKY.

Belongs to the bacterial ribosomal protein bL28 family.

This Erwinia tasmaniensis (strain DSM 17950 / CFBP 7177 / CIP 109463 / NCPPB 4357 / Et1/99) protein is Large ribosomal subunit protein bL28.